Consider the following 143-residue polypeptide: Large ribosomal subunit protein uL11 (143 aa).

The protein belongs to the universal ribosomal protein uL11 family. Part of the ribosomal stalk of the 50S ribosomal subunit. Interacts with L10 and the large rRNA to form the base of the stalk. L10 forms an elongated spine to which L12 dimers bind in a sequential fashion forming a multimeric L10(L12)X complex. In terms of processing, one or more lysine residues are methylated.

In terms of biological role, forms part of the ribosomal stalk which helps the ribosome interact with GTP-bound translation factors. The protein is Large ribosomal subunit protein uL11 of Koribacter versatilis (strain Ellin345).